A 451-amino-acid polypeptide reads, in one-letter code: Tetraspanin-14 (451 aa).

Residues 1–56 (MPHRAPRRFMKTAPGACDWEQCLLMGSGEPTRARAVVSSSHKQRKPRQEISACLKW) lie on the Cytoplasmic side of the membrane. A Basolateral membrane targeting motif is present at residues 20-24 (EQCLL). The helical transmembrane segment at 57-77 (LVFLLNSIVFLVGVGILALGV) threads the bilayer. The Extracellular segment spans residues 78–96 (YLFIKDFREVKLVDIILNP). The chain crosses the membrane as a helical span at residues 97 to 117 (AILISIFGFSICVVSFFGFMG). Residues 118 to 130 (ALRDNIFLLKCFA) are Cytoplasmic-facing. A helical transmembrane segment spans residues 131-151 (ACVFLSYILVVAVTLVFFTLF). Residues 152-285 (YTDTTEGLSA…QPLRTLFESH (134 aa)) lie on the Extracellular side of the membrane. 2 N-linked (GlcNAc...) asparagine glycosylation sites follow: Asn-205 and Asn-211. The helical transmembrane segment at 286–306 (AVHVGAFVALLIVPVCISVCL) threads the bilayer. At 307–451 (TNILAKQVDH…TDLVPQKSKS (145 aa)) the chain is on the cytoplasmic side. A disordered region spans residues 328-451 (NDRRRKRDHN…TDLVPQKSKS (124 aa)). Pro residues predominate over residues 366–376 (PDIPPPLPPIE). Positions 410–434 (ATTTRTPPAAAGPAPTPQATTTNRT) are enriched in low complexity. The segment covering 435–444 (HQWVLQQTDL) has biased composition (polar residues).

Belongs to the tetraspanin (TM4SF) family. In terms of tissue distribution, expressed in the germline, particularly in sperm cells. Expressed in the germline (particularly in sperm cells), anterior sensory cilia, hypodermis and vulva (at protein level). As to expression, expressed in the pharynx, hypodermis and vulva (at protein level).

The protein localises to the cell membrane. It is found in the cytoplasmic vesicle membrane. It localises to the endosome membrane. Its subcellular location is the early endosome membrane. The protein resides in the late endosome membrane. The protein localises to the recycling endosome membrane. It is found in the apical cell membrane. It localises to the basolateral cell membrane. Functions redundantly with tsp-12 to regulate cell surface levels of the BMP type II receptor daf-4 (but not BMP type I receptor sma-6), probably by regulating endosomal sorting and recycling of receptors, preventing their targeting to degradative lysosomes. Together with tsp-12, regulates cell fate specification in the postembryonic mesodermal M lineage, body size, male development and vulva development, probably by positively modulating BMP-like Sma/Mab signaling. Together with tsp-12 involved in maintaining the structural and functional integrity of the endosomal network. Together with tsp-12, probably acts by modulating the activation of glp-1, Notch-like receptor, to regulate germline maturation. Its function is as follows. Functions redundantly with tsp-12 to regulate cell fate specification in the postembryonic mesodermal M lineage, body size, embryonic and vulva development. In terms of biological role, functions redundantly with tsp-12 to regulate cell fate specification in the postembryonic mesodermal M lineage. Likely plays a complementary role in mesodermal development with tsp-14 isoform a, but may be more critical. In Caenorhabditis elegans, this protein is Tetraspanin-14.